The sequence spans 419 residues: MAPK/MAK/MRK overlapping kinase (419 aa).

The region spanning 4–285 (YKAIGKIGEG…AHQALQHPYF (282 aa)) is the Protein kinase domain. ATP contacts are provided by residues 10-18 (IGEGTFSEV) and Lys33. Asp128 functions as the Proton acceptor in the catalytic mechanism. 2 disordered regions span residues 285–344 (FQEQ…RGPA) and 390–419 (PASK…KGGR). Composition is skewed to basic and acidic residues over residues 322–338 (KEGR…EDRP) and 393–402 (KKTDPQKDLK).

It belongs to the protein kinase superfamily. CMGC Ser/Thr protein kinase family. CDC2/CDKX subfamily. The cofactor is Mg(2+). In terms of processing, autophosphorylated. In terms of tissue distribution, expressed in heart, brain, lung, kidney, and pancreas, and at very low levels in placenta, liver and skeletal muscle. Detected in retina.

Its subcellular location is the cytoplasm. The protein resides in the cell projection. It is found in the cilium. The protein localises to the nucleus. The enzyme catalyses L-seryl-[protein] + ATP = O-phospho-L-seryl-[protein] + ADP + H(+). It catalyses the reaction L-threonyl-[protein] + ATP = O-phospho-L-threonyl-[protein] + ADP + H(+). With respect to regulation, phosphorylation appears to increase the enzymatic activity. In terms of biological role, able to phosphorylate several exogenous substrates and to undergo autophosphorylation. Negatively regulates cilium length in a cAMP and mTORC1 signaling-dependent manner. This chain is MAPK/MAK/MRK overlapping kinase (MOK), found in Homo sapiens (Human).